The sequence spans 198 residues: MSGTEAGAGEPAAEEPTKEAAQPEAGAPDAGTPEASAPEAGAAQPEAGTQPEAGTAQPEAPPEGTPETTPADEKLGIAHIYSSYNNTIIHMTDLTGAETVSISSGGVHVNADRYESSPFAAMKAANKVIESARAKGFTGFHIRVRAVGGVGSRVPGPGAQAAIRALARGGFRIGRIDDVTPIPHDTTRKKGGKRGRRV.

2 stretches are compositionally biased toward low complexity: residues 1–11 and 19–58; these read MSGTEAGAGEP and EAAQ…TAQP. 2 disordered regions span residues 1–72 and 178–198; these read MSGT…TPAD and DVTP…GRRV. Positions 187-198 are enriched in basic residues; that stretch reads TRKKGGKRGRRV.

It belongs to the universal ribosomal protein uS11 family. Part of the 30S ribosomal subunit.

In terms of biological role, located on the platform of the 30S subunit. The sequence is that of Small ribosomal subunit protein uS11 from Cenarchaeum symbiosum (strain A).